A 505-amino-acid polypeptide reads, in one-letter code: tRNA (guanine(6)-N(2))-methyltransferase THUMP3 (505 aa).

Residues 145-182 are disordered; that stretch reads KAKRRKANQSAGKEKADCGQGDKADEKDGKKKHASSTS. Positions 156-173 are enriched in basic and acidic residues; that stretch reads GKEKADCGQGDKADEKDG. The THUMP domain maps to 171 to 287; the sequence is KDGKKKHASS…DNEVIVAIAL (117 aa).

It belongs to the methyltransferase superfamily. Part of the heterodimeric THUMPD3-TRM112 methyltransferase complex; this complex forms an active tRNA methyltransferase, where TRMT112 acts as an activator of the catalytic subunit THUMPD3. In terms of tissue distribution, ubiquitously expressed. Abundantly expressed in the testis, also expressed in the brain, heart, kidney, liver, lung, muscle and spleen.

Its subcellular location is the cytoplasm. It catalyses the reaction guanosine(6) in tRNA + S-adenosyl-L-methionine = N(2)-methylguanosine(6) in tRNA + S-adenosyl-L-homocysteine + H(+). It carries out the reaction guanosine(7) in tRNA + S-adenosyl-L-methionine = N(2)-methylguanosine(7) in tRNA + S-adenosyl-L-homocysteine + H(+). Catalytic subunit of the THUMPD3-TRM112 methyltransferase complex, that specifically mediates the S-adenosyl-L-methionine-dependent N(2)-methylation of guanosine nucleotide at position 6 (m2G6) in tRNAs. This is one of the major tRNA (guanine-N(2))-methyltransferases. Also catalyzes the S-adenosyl-L-methionine-dependent N(2)-methylation of guanosine nucleotide at position 7 of tRNA(Trp). This chain is tRNA (guanine(6)-N(2))-methyltransferase THUMP3, found in Mus musculus (Mouse).